A 131-amino-acid chain; its full sequence is Small ribosomal subunit protein uS11 (131 aa).

The protein belongs to the universal ribosomal protein uS11 family. Part of the 30S ribosomal subunit. Interacts with proteins S7 and S18. Binds to IF-3.

In terms of biological role, located on the platform of the 30S subunit, it bridges several disparate RNA helices of the 16S rRNA. Forms part of the Shine-Dalgarno cleft in the 70S ribosome. This Exiguobacterium sibiricum (strain DSM 17290 / CCUG 55495 / CIP 109462 / JCM 13490 / 255-15) protein is Small ribosomal subunit protein uS11.